Reading from the N-terminus, the 356-residue chain is Histidinol-phosphate aminotransferase (356 aa).

K214 carries the post-translational modification N6-(pyridoxal phosphate)lysine.

It belongs to the class-II pyridoxal-phosphate-dependent aminotransferase family. Histidinol-phosphate aminotransferase subfamily. Homodimer. It depends on pyridoxal 5'-phosphate as a cofactor.

The catalysed reaction is L-histidinol phosphate + 2-oxoglutarate = 3-(imidazol-4-yl)-2-oxopropyl phosphate + L-glutamate. Its pathway is amino-acid biosynthesis; L-histidine biosynthesis; L-histidine from 5-phospho-alpha-D-ribose 1-diphosphate: step 7/9. This is Histidinol-phosphate aminotransferase from Shigella sonnei (strain Ss046).